The following is a 610-amino-acid chain: UvrABC system protein C (610 aa).

The region spanning 16–94 is the GIY-YIG domain; it reads SQPGVYRMYD…IKLYQPRYNV (79 aa). The UVR domain occupies 204 to 239; that stretch reads DQVLTQLIARMEKASQDLAFEEAARIRDQIQAVRRV.

Belongs to the UvrC family. Interacts with UvrB in an incision complex.

It localises to the cytoplasm. Its function is as follows. The UvrABC repair system catalyzes the recognition and processing of DNA lesions. UvrC both incises the 5' and 3' sides of the lesion. The N-terminal half is responsible for the 3' incision and the C-terminal half is responsible for the 5' incision. The sequence is that of UvrABC system protein C from Salmonella schwarzengrund (strain CVM19633).